The chain runs to 294 residues: 4-hydroxy-tetrahydrodipicolinate synthase (294 aa).

Position 47 (Thr47) interacts with pyruvate. The active-site Proton donor/acceptor is Tyr136. Catalysis depends on Lys164, which acts as the Schiff-base intermediate with substrate. Val206 contacts pyruvate.

This sequence belongs to the DapA family. In terms of assembly, homotetramer; dimer of dimers.

It is found in the cytoplasm. It carries out the reaction L-aspartate 4-semialdehyde + pyruvate = (2S,4S)-4-hydroxy-2,3,4,5-tetrahydrodipicolinate + H2O + H(+). The protein operates within amino-acid biosynthesis; L-lysine biosynthesis via DAP pathway; (S)-tetrahydrodipicolinate from L-aspartate: step 3/4. Functionally, catalyzes the condensation of (S)-aspartate-beta-semialdehyde [(S)-ASA] and pyruvate to 4-hydroxy-tetrahydrodipicolinate (HTPA). This chain is 4-hydroxy-tetrahydrodipicolinate synthase, found in Acaryochloris marina (strain MBIC 11017).